The sequence spans 618 residues: DNA mismatch repair protein MutL (618 aa).

The span at 367-381 (EPTAAREPATPRYSG) shows a compositional bias: low complexity. The interval 367-402 (EPTAAREPATPRYSGGASGGNGGRQSAGGWPHAQPG) is disordered. Residues 382-392 (GASGGNGGRQS) are compositionally biased toward gly residues.

Belongs to the DNA mismatch repair MutL/HexB family.

This protein is involved in the repair of mismatches in DNA. It is required for dam-dependent methyl-directed DNA mismatch repair. May act as a 'molecular matchmaker', a protein that promotes the formation of a stable complex between two or more DNA-binding proteins in an ATP-dependent manner without itself being part of a final effector complex. The polypeptide is DNA mismatch repair protein MutL (Salmonella heidelberg (strain SL476)).